Consider the following 198-residue polypeptide: Protein-L-isoaspartate O-methyltransferase (198 aa).

The active site involves serine 50.

Belongs to the methyltransferase superfamily. L-isoaspartyl/D-aspartyl protein methyltransferase family.

It localises to the cytoplasm. The catalysed reaction is [protein]-L-isoaspartate + S-adenosyl-L-methionine = [protein]-L-isoaspartate alpha-methyl ester + S-adenosyl-L-homocysteine. Catalyzes the methyl esterification of L-isoaspartyl residues in peptides and proteins that result from spontaneous decomposition of normal L-aspartyl and L-asparaginyl residues. It plays a role in the repair and/or degradation of damaged proteins. This chain is Protein-L-isoaspartate O-methyltransferase, found in Thermosipho melanesiensis (strain DSM 12029 / CIP 104789 / BI429).